The following is a 235-amino-acid chain: Sugar fermentation stimulation protein homolog (235 aa).

Belongs to the SfsA family.

This Nitrosococcus oceani (strain ATCC 19707 / BCRC 17464 / JCM 30415 / NCIMB 11848 / C-107) protein is Sugar fermentation stimulation protein homolog.